We begin with the raw amino-acid sequence, 371 residues long: Putative glutamate--cysteine ligase 2 (371 aa).

It belongs to the glutamate--cysteine ligase type 2 family. YbdK subfamily. In terms of assembly, homodimer.

It catalyses the reaction L-cysteine + L-glutamate + ATP = gamma-L-glutamyl-L-cysteine + ADP + phosphate + H(+). ATP-dependent carboxylate-amine ligase which exhibits weak glutamate--cysteine ligase activity. The chain is Putative glutamate--cysteine ligase 2 from Cronobacter sakazakii (strain ATCC BAA-894) (Enterobacter sakazakii).